The chain runs to 197 residues: Holliday junction branch migration complex subunit RuvA (197 aa).

A domain I region spans residues 1–63 (MFEYLNGKLV…EDAHSLYGFV (63 aa)). A domain II region spans residues 64–142 (NEAEKALFLR…ATGTVGISLL (79 aa)). Residues 142-146 (LDAGP) are flexible linker. The segment at 147–197 (AGNLALEEAIEALQALGYKATELKKIEKKLAQETGLTSEEYIKSALKLMMK) is domain III.

Belongs to the RuvA family. In terms of assembly, homotetramer. Forms an RuvA(8)-RuvB(12)-Holliday junction (HJ) complex. HJ DNA is sandwiched between 2 RuvA tetramers; dsDNA enters through RuvA and exits via RuvB. An RuvB hexamer assembles on each DNA strand where it exits the tetramer. Each RuvB hexamer is contacted by two RuvA subunits (via domain III) on 2 adjacent RuvB subunits; this complex drives branch migration. In the full resolvosome a probable DNA-RuvA(4)-RuvB(12)-RuvC(2) complex forms which resolves the HJ.

It is found in the cytoplasm. The RuvA-RuvB-RuvC complex processes Holliday junction (HJ) DNA during genetic recombination and DNA repair, while the RuvA-RuvB complex plays an important role in the rescue of blocked DNA replication forks via replication fork reversal (RFR). RuvA specifically binds to HJ cruciform DNA, conferring on it an open structure. The RuvB hexamer acts as an ATP-dependent pump, pulling dsDNA into and through the RuvAB complex. HJ branch migration allows RuvC to scan DNA until it finds its consensus sequence, where it cleaves and resolves the cruciform DNA. The protein is Holliday junction branch migration complex subunit RuvA of Lactococcus lactis subsp. lactis (strain IL1403) (Streptococcus lactis).